We begin with the raw amino-acid sequence, 317 residues long: Transaldolase (317 aa).

The active-site Schiff-base intermediate with substrate is the Lys126.

This sequence belongs to the transaldolase family. Type 1 subfamily. As to quaternary structure, homodimer.

The protein resides in the cytoplasm. The catalysed reaction is D-sedoheptulose 7-phosphate + D-glyceraldehyde 3-phosphate = D-erythrose 4-phosphate + beta-D-fructose 6-phosphate. The protein operates within carbohydrate degradation; pentose phosphate pathway; D-glyceraldehyde 3-phosphate and beta-D-fructose 6-phosphate from D-ribose 5-phosphate and D-xylulose 5-phosphate (non-oxidative stage): step 2/3. In terms of biological role, transaldolase is important for the balance of metabolites in the pentose-phosphate pathway. The polypeptide is Transaldolase (Burkholderia cenocepacia (strain ATCC BAA-245 / DSM 16553 / LMG 16656 / NCTC 13227 / J2315 / CF5610) (Burkholderia cepacia (strain J2315))).